The primary structure comprises 44 residues: MAASGGTKKAQSGGRRLREPSSRPSRRARQRPRRGALRKAGRFL.

Residues 1-44 are disordered; the sequence is MAASGGTKKAQSGGRRLREPSSRPSRRARQRPRRGALRKAGRFL. The span at 24–44 shows a compositional bias: basic residues; the sequence is PSRRARQRPRRGALRKAGRFL.

Interacts with KLHL15; preventing ubiquitination and degradation of RBBP8/CtIP. Interacts with PARP1.

It localises to the nucleus. The protein resides in the nucleolus. It is found in the chromosome. Its function is as follows. Micropeptide that acts as a regulator of DNA repair both by preventing KLHL15-mediated ubiquitination and degradation of RBBP8/CtIP, and by promoting the poly-ADP-ribosyltransferase activity of PARP1. Prevents KLHL15-mediated ubiquitination of RBBP8/CtIP by competitively blocking the association between KLHL15 and RBBP8/CtIP. Recruited to DNA damage sites via association with poly-ADP-ribose chains, and enhances the poly-ADP-ribosyltransferase activity of PARP1. The chain is Poly-ADP-ribosylation-amplifying and CtIP-maintaining micropeptide from Homo sapiens (Human).